We begin with the raw amino-acid sequence, 316 residues long: Protoheme IX farnesyltransferase (316 aa).

9 helical membrane-spanning segments follow: residues 28-48 (WLAL…AAGM), 57-77 (IPIG…AGAI), 106-126 (AALV…WLAT), 129-149 (LAAD…TMWL), 156-176 (NIVI…AATM), 179-199 (MAVL…PHFW), 230-250 (ILIY…VHEV), 254-274 (YTVV…RVLM), and 296-316 (YSLV…VLIG).

It belongs to the UbiA prenyltransferase family. Protoheme IX farnesyltransferase subfamily.

The protein resides in the cell inner membrane. It carries out the reaction heme b + (2E,6E)-farnesyl diphosphate + H2O = Fe(II)-heme o + diphosphate. Its pathway is porphyrin-containing compound metabolism; heme O biosynthesis; heme O from protoheme: step 1/1. Converts heme B (protoheme IX) to heme O by substitution of the vinyl group on carbon 2 of heme B porphyrin ring with a hydroxyethyl farnesyl side group. This Gluconobacter oxydans (strain 621H) (Gluconobacter suboxydans) protein is Protoheme IX farnesyltransferase.